A 108-amino-acid polypeptide reads, in one-letter code: Ig kappa chain V region K-25 (108 aa).

Positions 1-23 are framework-1; sequence AVELTQTPASVEAAVGGTVTIKC. The tract at residues 24–34 is complementarity-determining-1; that stretch reads QASQBIYSYLS. Residues 35-49 are framework-2; it reads WYQQKPGQPPKLLIY. The interval 50–56 is complementarity-determining-2; sequence KASTLAS. The framework-3 stretch occupies residues 57–88; sequence GVSSRFKGSGSGTEFTLTISDLZCADAATYYC. The interval 89–97 is complementarity-determining-3; it reads QTYSYSSTY. The interval 98–107 is framework-4; it reads FGGGTEVVVK.

This Oryctolagus cuniculus (Rabbit) protein is Ig kappa chain V region K-25.